Reading from the N-terminus, the 335-residue chain is tRNA (adenine(58)-N(1))-methyltransferase catalytic subunit TRM61 (335 aa).

S-adenosyl-L-methionine contacts are provided by residues 114–116, glutamate 135, arginine 140, 162–163, and aspartate 183; these read SAS and DV. A compositionally biased stretch (basic and acidic residues) spans 271-281; it reads VMKKGPSEEPP. Residues 271–302 form a disordered region; that stretch reads VMKKGPSEEPPAKLQKTDNGYKTPKKSTKVKE.

Belongs to the class I-like SAM-binding methyltransferase superfamily. TRM61 family. In terms of assembly, heterotetramer; composed of two copies of TRM6 and two copies of TRM61.

The protein localises to the nucleus. It carries out the reaction adenosine(58) in tRNA + S-adenosyl-L-methionine = N(1)-methyladenosine(58) in tRNA + S-adenosyl-L-homocysteine + H(+). Functionally, catalytic subunit of tRNA (adenine-N(1)-)-methyltransferase, which catalyzes the formation of N(1)-methyladenine at position 58 (m1A58) in initiator methionyl-tRNA. This chain is tRNA (adenine(58)-N(1))-methyltransferase catalytic subunit TRM61 (TRM61), found in Candida albicans (strain SC5314 / ATCC MYA-2876) (Yeast).